A 457-amino-acid chain; its full sequence is Neuropeptide receptor npr-1 (457 aa).

Residues 1–22 lie on the Extracellular side of the membrane; it reads MEVENFTDCQVYWKVYPDPSQS. The chain crosses the membrane as a helical span at residues 23–43; that stretch reads IYAIVPFLTVYLFLFFLGLFG. Topologically, residues 44–62 are cytoplasmic; it reads NVTLIYVTCSHKALLSVQN. The helical transmembrane segment at 63–83 threads the bilayer; it reads IFILNLAASDCMMCILSLPIT. Residues 84–100 lie on the Extracellular side of the membrane; that stretch reads PITNVYKNWYFGNLLCH. A disulfide bridge links C99 with C178. Residues 101 to 121 traverse the membrane as a helical segment; it reads LIPCIQGISIFVCTFSLGAIA. The Cytoplasmic portion of the chain corresponds to 122–140; that stretch reads LDRYILVVRPHSTPLSQRG. The helical transmembrane segment at 141–161 threads the bilayer; sequence AFLTTVLLWILSFVVTLPYAF. Residues 162 to 193 are Extracellular-facing; sequence NMQMIEYTEERICGYFCTEKWESAKSRRAYTM. Residues 194–214 traverse the membrane as a helical segment; that stretch reads IVMLAQFVVPFAVMAFCYANI. At 215-279 the chain is on the cytoplasmic side; the sequence is VSVLSKRAQT…LQNRRTTSIL (65 aa). Residues 280-300 traverse the membrane as a helical segment; it reads VTMVVWFGITWLPHNVISLII. Residues 301–324 are Extracellular-facing; it reads EYDDTQSFFRLYGRDDYDISYLLN. Residues 325–345 traverse the membrane as a helical segment; the sequence is LFTHSIAMSNNVLNPVLYAWL. Topologically, residues 346-457 are cytoplasmic; the sequence is NPSFRQLVIK…IEFSVNDTLV (112 aa).

The protein belongs to the G-protein coupled receptor 1 family. In terms of tissue distribution, expressed in neurons, including neurons in the head, the ventral nerve cord, and the preanal ganglion.

It is found in the membrane. G-protein coupled receptor for FARP(FMRFamide related peptide) neuropeptides. Activated by FARP neuropeptides flp-18 and flp-21. Plays a role in modulating social and feeding behavior. Required to modulate locomotion quiescence during the sleep-like state called lethargus, which occurs during molting between larval and adult stages, in part by regulating touch sensitivity. In Caenorhabditis elegans, this protein is Neuropeptide receptor npr-1.